We begin with the raw amino-acid sequence, 398 residues long: Exodeoxyribonuclease 7 large subunit (398 aa).

This sequence belongs to the XseA family. Heterooligomer composed of large and small subunits.

The protein resides in the cytoplasm. The enzyme catalyses Exonucleolytic cleavage in either 5'- to 3'- or 3'- to 5'-direction to yield nucleoside 5'-phosphates.. Bidirectionally degrades single-stranded DNA into large acid-insoluble oligonucleotides, which are then degraded further into small acid-soluble oligonucleotides. This is Exodeoxyribonuclease 7 large subunit from Anaplasma phagocytophilum (strain HZ).